We begin with the raw amino-acid sequence, 407 residues long: MSRQINAATPSSSRHHRLSLSRRRINFTTPSEAQPSSSSRSQTSSSSRSHRRQERRQEQRVSEENVQIIGNVNEPLTRSYHRQGVTYNVHGEVNISNADPLLSQEDDVILINSENVDRERFPDISSQQYQNNIASETAAQRALQRALDLEAQLMNEIAPRSPVYSPSYAPNSPNYVIPQSPDLFASPQSSEQQQQSEPEEDVEVSCNICFTTFKDTKNVNSSFVTTTHCNHAVCFKCYVKIIMANSVYKCFCSATSSNCRVYNKHGYVEFMPIDVTRNQDSIKQHWRELLENNTVNNQTTDLNYVEQLQKELAELRAKTCQVEHKMTMLNSDYIMLKHKHAVAELDLQKANYDLQESTKKSEELQSTVNNLQEQLNKQVVESQAKFLEFERNNSDLVSKLQTVMSRR.

The span at 1 to 10 (MSRQINAATP) shows a compositional bias: polar residues. The segment at 1–69 (MSRQINAATP…RVSEENVQII (69 aa)) is disordered. A compositionally biased stretch (basic residues) spans 13–25 (SRHHRLSLSRRRI). Residues 31–47 (SEAQPSSSSRSQTSSSS) are compositionally biased toward low complexity. The stretch at 127–158 (QQYQNNIASETAAQRALQRALDLEAQLMNEIA) forms a coiled coil. Residues 179-200 (QSPDLFASPQSSEQQQQSEPEE) form a disordered region. A compositionally biased stretch (low complexity) spans 186–196 (SPQSSEQQQQS). An RING-type; degenerate zinc finger spans residues 206 to 254 (CNICFTTFKDTKNVNSSFVTTTHCNHAVCFKCYVKIIMANSVYKCFCSA). Positions 336–393 (LKHKHAVAELDLQKANYDLQESTKKSEELQSTVNNLQEQLNKQVVESQAKFLEFERNN) form a coiled coil.

It belongs to the alphabaculovirus IE2 protein family. In terms of assembly, homooligomer. Post-translationally, auto-ubiquitinated.

It is found in the host nucleus. The enzyme catalyses S-ubiquitinyl-[E2 ubiquitin-conjugating enzyme]-L-cysteine + [acceptor protein]-L-lysine = [E2 ubiquitin-conjugating enzyme]-L-cysteine + N(6)-ubiquitinyl-[acceptor protein]-L-lysine.. In terms of biological role, RING-finger E3 ubiquitin ligase that plays an important regulatory role during the initial stages of infection. Migrates to specific nuclear foci early in infection supposely to prepare the sites for viral replication by targeting and ubiquitinating host proteins. The protein is E3 ubiquitin-protein ligase IE2 (IE2) of Rachiplusia ou multiple nucleopolyhedrovirus (strain R1) (RoMNPV).